The chain runs to 1880 residues: Nonribosomal peptide synthetase otaB (1880 aa).

The interval 205-594 (AQAVERGNSI…SVSFVGRRQA (390 aa)) is adenylation 1. The Carrier domain maps to 728–804 (LPLSPLERQI…ELGAHLEQEA (77 aa)). Position 765 is an O-(pantetheine 4'-phosphoryl)serine (Ser765). Positions 840 to 1250 (EDVYPCTALQ…LLSPQDQQQL (411 aa)) are condensation. The interval 1269–1665 (QRQCLAHPQK…GRKDRQVKLR (397 aa)) is adenylation 2.

This sequence belongs to the NRP synthetase family.

It carries out the reaction 7-carboxymellein + L-phenylalanine + ATP = ochratoxin B + ADP + phosphate + H(+). The protein operates within mycotoxin biosynthesis. Nonribosomal peptide synthetase; part of the gene cluster that mediates the biosynthesis of ochratoxin A (OTA), a mycotoxin composed of a chlorinated type I polyketide dihydroisocoumarin moiety linked to L-phenylalanine, and demonstrated to have nephrotoxic, immunotoxic, genotoxic, neurotoxic, and teratogenic properties. OtaB is responsible for the linking of phenylalanine to the dihydroisocoumarin ring. The pathway begins with the highly reducing polyketide synthase otaA that catalyzes the formation of the isocoumarin group during the initial stages of biosynthesis, starting from one acetate and 4 malonate units, to originate the characteristic pentaketide skeleton 7-methylmellein (7-MM) of the OTA molecule. The newly identified cyclase otaY might be involved in the polyketide cyclization reaction during the initial steps of the OTA biosynthesis. 7-MM is then oxidized into 7-carboxymellein (also called ochratoxin beta) by the cytochrome P450 monooxygenase otaC. The NRPS encoded by the otaB gene is involved in the linking of phenylalanine to the dihydroisocoumarin ring. The reaction catalyzed by NRPS results in the production of ochratoxin B (OTB), which is the non-chlorinated analog of OTA and which subsequently serves as the substrate of the halogenase otaD for chlorination activity to form the final molecular structure of OTA, containing a chlorine atom in the C-5 position of the molecule. The polypeptide is Nonribosomal peptide synthetase otaB (Aspergillus niger (strain ATCC MYA-4892 / CBS 513.88 / FGSC A1513)).